We begin with the raw amino-acid sequence, 388 residues long: S-adenosylmethionine synthase (388 aa).

H16 provides a ligand contact to ATP. D18 serves as a coordination point for Mg(2+). Residue E44 coordinates K(+). Residues E57 and Q100 each contribute to the L-methionine site. Residues 100 to 110 are flexible loop; it reads QSPDIAQGVNE. ATP is bound by residues 167 to 169, 233 to 234, D242, 248 to 249, and K269; these read DGK, RF, and RK. D242 serves as a coordination point for L-methionine. An L-methionine-binding site is contributed by K273.

The protein belongs to the AdoMet synthase family. Homotetramer; dimer of dimers. The cofactor is Mg(2+). It depends on K(+) as a cofactor.

The protein resides in the cytoplasm. The catalysed reaction is L-methionine + ATP + H2O = S-adenosyl-L-methionine + phosphate + diphosphate. Its pathway is amino-acid biosynthesis; S-adenosyl-L-methionine biosynthesis; S-adenosyl-L-methionine from L-methionine: step 1/1. Its function is as follows. Catalyzes the formation of S-adenosylmethionine (AdoMet) from methionine and ATP. The overall synthetic reaction is composed of two sequential steps, AdoMet formation and the subsequent tripolyphosphate hydrolysis which occurs prior to release of AdoMet from the enzyme. This Desulfosudis oleivorans (strain DSM 6200 / JCM 39069 / Hxd3) (Desulfococcus oleovorans) protein is S-adenosylmethionine synthase.